We begin with the raw amino-acid sequence, 227 residues long: Translation initiation factor 6 (227 aa).

The protein belongs to the eIF-6 family.

Its function is as follows. Binds to the 50S ribosomal subunit and prevents its association with the 30S ribosomal subunit to form the 70S initiation complex. This is Translation initiation factor 6 from Methanococcus maripaludis (strain C6 / ATCC BAA-1332).